A 232-amino-acid polypeptide reads, in one-letter code: uncharacterized protein (232 aa).

A helical membrane pass occupies residues 209-229 (ATISTPALGYAYFLFTLTLVF).

The protein resides in the host membrane. This is an uncharacterized protein from Saccharolobus islandicus (Sulfolobus islandicus).